The chain runs to 185 residues: Ribonuclease M5 (185 aa).

The region spanning 3-84 is the Toprim domain; that stretch reads KEVIVVEGRD…KHARISQSEG (82 aa). Mg(2+) is bound by residues Glu9, Asp55, and Asp57.

It belongs to the ribonuclease M5 family. Mg(2+) is required as a cofactor.

The protein localises to the cytoplasm. It carries out the reaction Endonucleolytic cleavage of RNA, removing 21 and 42 nucleotides, respectively, from the 5'- and 3'-termini of a 5S-rRNA precursor.. Its function is as follows. Required for correct processing of both the 5' and 3' ends of 5S rRNA precursor. Cleaves both sides of a double-stranded region yielding mature 5S rRNA in one step. This Clostridium acetobutylicum (strain ATCC 824 / DSM 792 / JCM 1419 / IAM 19013 / LMG 5710 / NBRC 13948 / NRRL B-527 / VKM B-1787 / 2291 / W) protein is Ribonuclease M5.